We begin with the raw amino-acid sequence, 110 residues long: UPF0060 membrane protein RPA3838 (110 aa).

Transmembrane regions (helical) follow at residues 4-24, 31-51, 59-79, and 85-105; these read LLTFCAAALMEIAGCFAFWAW, PLWLIPGMLALALFAYLLTLA, AYAAYGGIYIASALLWGWAIE, and QWDVIGAAICLVGMSVILFGP.

This sequence belongs to the UPF0060 family.

The protein resides in the cell inner membrane. This chain is UPF0060 membrane protein RPA3838, found in Rhodopseudomonas palustris (strain ATCC BAA-98 / CGA009).